A 211-amino-acid chain; its full sequence is Claudin-7 (211 aa).

Topologically, residues 1-7 (MANSGLQ) are cytoplasmic. Residues 8-28 (LLGFSMAMLGWVGLIASTAIP) traverse the membrane as a helical segment. Over 29–81 (QWQMSSYAGDNIITAQAMYKGLWMECVTQSTGMMSCKMYDSVLALPAATQATR) the chain is Extracellular. Residues 82–102 (ALMIVSLVLGFLAMFVATMGM) form a helical membrane-spanning segment. Over 103-119 (KCTRCGGDDKVKKARIA) the chain is Cytoplasmic. The helical transmembrane segment at 120–140 (MTGGIIFIVAGLAALVACSWI) threads the bilayer. Over 141-160 (GHQIVTDFYNPLTPMNIKYE) the chain is Extracellular. A helical membrane pass occupies residues 161 to 181 (FGPAIFIGWAGSALVLLGGAL). At 182 to 211 (LSCSCPGSESKAAYRAPRSYPKSNSSKEYV) the chain is on the cytoplasmic side. Residues 210–211 (YV) are interactions with TJP1, TJP2 and TJP3.

This sequence belongs to the claudin family. In terms of assembly, directly interacts with TJP1/ZO-1, TJP2/ZO-2 and TJP3/ZO-3. The phosphorylated form interacts with EPCAM. In terms of processing, phosphorylated.

It is found in the cell membrane. The protein localises to the basolateral cell membrane. It localises to the cell junction. The protein resides in the tight junction. Plays a major role in tight junction-specific obliteration of the intercellular space. This is Claudin-7 (Cldn7) from Rattus norvegicus (Rat).